The primary structure comprises 325 residues: Small ribosomal subunit biogenesis GTPase RsgA (325 aa).

Positions 80-241 (LSKQIHIIAS…IIDTPGIKGF (162 aa)) constitute a CP-type G domain. GTP-binding positions include 129–132 (NKID) and 183–191 (GHSGVGKST). Cys-265, Cys-270, His-272, and Cys-278 together coordinate Zn(2+).

It belongs to the TRAFAC class YlqF/YawG GTPase family. RsgA subfamily. In terms of assembly, monomer. Associates with 30S ribosomal subunit, binds 16S rRNA. Zn(2+) is required as a cofactor.

Its subcellular location is the cytoplasm. In terms of biological role, one of several proteins that assist in the late maturation steps of the functional core of the 30S ribosomal subunit. Helps release RbfA from mature subunits. May play a role in the assembly of ribosomal proteins into the subunit. Circularly permuted GTPase that catalyzes slow GTP hydrolysis, GTPase activity is stimulated by the 30S ribosomal subunit. The chain is Small ribosomal subunit biogenesis GTPase RsgA from Flavobacterium johnsoniae (strain ATCC 17061 / DSM 2064 / JCM 8514 / BCRC 14874 / CCUG 350202 / NBRC 14942 / NCIMB 11054 / UW101) (Cytophaga johnsonae).